We begin with the raw amino-acid sequence, 2269 residues long: Anaphase-promoting complex subunit 1 (2269 aa).

Disordered stretches follow at residues 305–334 (PSSNAENDNTNNNNNNNNTNTNISNNQTIN), 379–433 (SSPP…QENS), 609–644 (NNNNNNNNNNNNNNNNNNNNNNNNNNNNNNNKRKPL), 804–845 (KVYP…NNNN), and 1136–1197 (STAS…NSTS). 5 stretches are compositionally biased toward low complexity: residues 306-334 (SSNAENDNTNNNNNNNNTNTNISNNQTIN), 379-430 (SSPP…QQQQ), 609-638 (NNNNNNNNNNNNNNNNNNNNNNNNNNNNNN), 809-845 (NNNNNNNNNNNNNNNNNNNNNNNNNNNNNNNNNNNNN), and 1136-1159 (STASSSSNEMNSNSNITSINGQSN). The segment covering 1160 to 1177 (GLPMNSTTNQMNSHQINN) has biased composition (polar residues). PC repeat units lie at residues 1440–1472 (AALMGIGLLYCQTSNRRMTEVLLMEIGRKPIND) and 1483–1520 (TAGMALGLVNLGKGANEGSLTDLHVEDRLRSFIGISKE). Residues 1535 to 1586 (STPSISSNRNNNDLFNNGSNNNSSSNGGGGGGGGNNNGNNSNNGNNGSSQFK) are disordered. The segment covering 1540–1559 (SSNRNNNDLFNNGSNNNSSS) has biased composition (low complexity). Over residues 1560–1570 (NGGGGGGGGNN) the composition is skewed to gly residues. The segment covering 1571–1583 (NGNNSNNGNNGSS) has biased composition (low complexity). 3 PC repeats span residues 1605-1637 (GAIIALSLIYLKTNNLKISNYLSIPDTTFGLNY), 1722-1756 (GAAFSIGLKYAGSLNENAFSLLMDLIQLFRKRQVY), and 1792-1807 (LVMAGSGNLETLKILR). Low complexity predominate over residues 1960-1993 (NNNNNNNNNNNNNNNNNNNNNNNNNNNNNNNNNN). The segment at 1960–1997 (NNNNNNNNNNNNNNNNNNNNNNNNNNNNNNNNNNKNIL) is disordered.

It belongs to the APC1 family. The APC/C is composed of at least 13 subunits that stay tightly associated throughout the cell cycle: anapc1, anapc2, anapc3, anapc4, anapc5, anapc6, anapc7, anapc8, anapc10, anapc11, cdc20, cdc26 and cdh1.

The protein localises to the nucleus. It functions in the pathway protein modification; protein ubiquitination. Its function is as follows. Component of the anaphase promoting complex/cyclosome (APC/C), a cell cycle-regulated E3 ubiquitin-protein ligase complex that controls progression through mitosis and the G1 phase of the cell cycle. In Dictyostelium discoideum (Social amoeba), this protein is Anaphase-promoting complex subunit 1 (anapc1).